A 110-amino-acid chain; its full sequence is Inner membrane protein YgiZ (110 aa).

Over 1-8 (MLKQKIKT) the chain is Cytoplasmic. The helical transmembrane segment at 9-29 (IFEALLYIMLTYWLIDSFFAF) threads the bilayer. Residues 30–53 (NKYDWMLESGGNICSIPSVSGEDR) lie on the Periplasmic side of the membrane. A helical transmembrane segment spans residues 54–74 (ILQAMIAAFFLLTPLIILILR). At 75-83 (KLFMREMFE) the chain is on the cytoplasmic side. A helical membrane pass occupies residues 84–104 (FWVYVFSLGICLVCGWWLFWG). The Periplasmic portion of the chain corresponds to 105–110 (RFIFCY).

Its subcellular location is the cell inner membrane. The polypeptide is Inner membrane protein YgiZ (ygiZ) (Escherichia coli (strain K12)).